Consider the following 239-residue polypeptide: MRQPDSSLPRTGQDHTLSPYEPELGEVPSNDLSMADLDNVNKTGTTTIGISTAEGVVIATDMRASLGGRFVSNKNVQKVEQIHPSAALTLVGSVGGAQSFIRSLRAEVDLYEARRGEDISINALATLAGNFARGGPFFAINPILGGVDDEGHHVYSIDPAGGVMKDDYTVTGSGLTVAYGTLEREYEDDMTNEEAKRVAASGIKAAVERDTGSGNGVFLATVTDEDVEIKGHKDFDEVL.

Residues 1-16 (MRQPDSSLPRTGQDHT) show a composition bias toward polar residues. Residues 1 to 32 (MRQPDSSLPRTGQDHTLSPYEPELGEVPSNDL) are disordered. A propeptide spans 1–44 (MRQPDSSLPRTGQDHTLSPYEPELGEVPSNDLSMADLDNVNKTG) (removed in mature form; by autocatalysis). Catalysis depends on T45, which acts as the Nucleophile.

The protein belongs to the peptidase T1B family. The 20S proteasome core is composed of 14 alpha and 14 beta subunits that assemble into four stacked heptameric rings, resulting in a barrel-shaped structure. The two inner rings, each composed of seven catalytic beta subunits, are sandwiched by two outer rings, each composed of seven alpha subunits. The catalytic chamber with the active sites is on the inside of the barrel. Has a gated structure, the ends of the cylinder being occluded by the N-termini of the alpha-subunits. Is capped at one or both ends by the proteasome regulatory ATPase, PAN.

The protein resides in the cytoplasm. It carries out the reaction Cleavage of peptide bonds with very broad specificity.. Its activity is regulated as follows. The formation of the proteasomal ATPase PAN-20S proteasome complex, via the docking of the C-termini of PAN into the intersubunit pockets in the alpha-rings, triggers opening of the gate for substrate entry. Interconversion between the open-gate and close-gate conformations leads to a dynamic regulation of the 20S proteasome proteolysis activity. Functionally, component of the proteasome core, a large protease complex with broad specificity involved in protein degradation. This Natronomonas pharaonis (strain ATCC 35678 / DSM 2160 / CIP 103997 / JCM 8858 / NBRC 14720 / NCIMB 2260 / Gabara) (Halobacterium pharaonis) protein is Proteasome subunit beta.